Reading from the N-terminus, the 449-residue chain is Asparagine--tRNA ligase (449 aa).

The protein belongs to the class-II aminoacyl-tRNA synthetase family. As to quaternary structure, homodimer.

The protein resides in the cytoplasm. It catalyses the reaction tRNA(Asn) + L-asparagine + ATP = L-asparaginyl-tRNA(Asn) + AMP + diphosphate + H(+). This chain is Asparagine--tRNA ligase, found in Desulfotalea psychrophila (strain LSv54 / DSM 12343).